The sequence spans 297 residues: Carbamate kinase (297 aa).

It belongs to the carbamate kinase family.

The protein resides in the cytoplasm. It catalyses the reaction hydrogencarbonate + NH4(+) + ATP = carbamoyl phosphate + ADP + H2O + H(+). It carries out the reaction carbamate + ATP = carbamoyl phosphate + ADP. The enzyme catalyses hydrogencarbonate + NH4(+) = carbamate + H2O + H(+). Its pathway is nitrogen metabolism; (S)-allantoin degradation. Its function is as follows. Kinase involved in the anaerobic nitrogen utilization via the assimilation of allantoin. Catalyzes the transfer of a phosphate group from carbamoyl phosphate to ADP to produce ATP and leave carbamate, which spontaneously hydrolyzes to ammonia and hydrogencarbonate. This is Carbamate kinase from Escherichia coli O6:H1 (strain CFT073 / ATCC 700928 / UPEC).